Here is a 200-residue protein sequence, read N- to C-terminus: Nucleoside triphosphate pyrophosphatase (200 aa).

The Proton acceptor role is filled by aspartate 79.

This sequence belongs to the Maf family. It depends on a divalent metal cation as a cofactor.

It localises to the cytoplasm. The enzyme catalyses a ribonucleoside 5'-triphosphate + H2O = a ribonucleoside 5'-phosphate + diphosphate + H(+). It catalyses the reaction a 2'-deoxyribonucleoside 5'-triphosphate + H2O = a 2'-deoxyribonucleoside 5'-phosphate + diphosphate + H(+). Its function is as follows. Nucleoside triphosphate pyrophosphatase. May have a dual role in cell division arrest and in preventing the incorporation of modified nucleotides into cellular nucleic acids. The polypeptide is Nucleoside triphosphate pyrophosphatase (Legionella pneumophila (strain Lens)).